The chain runs to 226 residues: NEDD8-specific protease 1 (226 aa).

This sequence belongs to the peptidase C48 family.

Its function is as follows. Processes the pre-form of the ubiquitin-like protein NEDD8/RUB1. Has the capacity to discriminate between NEDD8/RUB1 and ubiquitin. Has no SUMO protease activity. In Arabidopsis thaliana (Mouse-ear cress), this protein is NEDD8-specific protease 1 (NEDP1).